The primary structure comprises 997 residues: Glutamate [NMDA] receptor subunit 1 (997 aa).

The N-terminal stretch at 1–26 is a signal peptide; it reads MAMAEFVFCRPLFGLAIVLLVAPIDA. Over 27–573 the chain is Extracellular; sequence AQRHTASDNP…TLVSFLQPFS (547 aa). N-linked (GlcNAc...) asparagine glycans are attached at residues Asn-258, Asn-314, Asn-345, Asn-397, Asn-454, Asn-481, and Asn-501. Residues 530–532 and Arg-537 each bind glycine; that span reads PLT. A helical transmembrane segment spans residues 574 to 594; sequence NTLWILVMVSVHVVALVLYLL. The Cytoplasmic segment spans residues 595–651; sequence DRFSPFGRFKLSHSDSNEEKALNLSSAVWFAWGVLLNSGIGEGTPRSFSARVLGMVW. Residues 652–672 traverse the membrane as a helical segment; it reads AGFAMIIVASYTANLAAFLVL. Topologically, residues 673–831 are extracellular; the sequence is ERPKTKLSGI…KTPNTLGLKN (159 aa). A glycan (N-linked (GlcNAc...) asparagine) is linked at Asn-693. Glycine-binding residues include Ser-703 and Asp-747. The helical transmembrane segment at 832 to 852 threads the bilayer; the sequence is MAGVFILVGVGIAGGVGLIII. The Cytoplasmic segment spans residues 853-997; sequence EVIYKKHQVK…YTSDVSHLVV (145 aa). Positions 970–997 are disordered; it reads LGKTRPQQSVLPPRYSPGYTSDVSHLVV. The segment covering 987–997 has biased composition (polar residues); the sequence is GYTSDVSHLVV.

The protein belongs to the glutamate-gated ion channel (TC 1.A.10.1) family. As to quaternary structure, forms a heteromeric NMDA channel with Nmdar2. Highly expressed in adult heads: in the brain and ring gland. Low expression throughout the entire brain is also seen. Higher expression levels were observed in some scattered cell bodies and part of their fibers, including those from several pairs of DPM (dorsal-posterior-medial) neurons surrounding the calyx, DAL (dorsal-anterior-lateral) and DPL (dorsal-posterior-lateral) neurons in the lateral protocerebrum (LP), VAL (ventral-anterior-lateral) neurons in the anterior protocerebrum, and two pairs of VP (ventral-posterior) neurons in the posterior protocerebrum. Many cell bodies in the optic lobes show preferential expression. Punctuate expression is notably detected in many brain regions including the superior medial protocerebrum. Weakly expressed in the antennal lobes and central complex.

Its subcellular location is the cell membrane. The protein localises to the postsynaptic cell membrane. It localises to the postsynaptic density. Functionally, NMDA receptor subtype of glutamate-gated ion channels with high calcium permeability and voltage-dependent sensitivity to magnesium. Mediated by glycine. This protein plays a key role in synaptic plasticity, synaptogenesis, excitotoxicity, memory acquisition and learning. It mediates neuronal functions in glutamate neurotransmission. Is involved in the cell surface targeting of NMDA receptors. Plays a role in associative learning and in long-term memory consolidation. The sequence is that of Glutamate [NMDA] receptor subunit 1 from Drosophila melanogaster (Fruit fly).